Here is a 479-residue protein sequence, read N- to C-terminus: Poly(A) polymerase catalytic subunit (479 aa).

Residues Asp-202 and Asp-204 contribute to the active site. Residues Asp-202, Asp-204, and Asp-253 each coordinate Ca(2+).

Belongs to the poxviridae poly(A) polymerase catalytic subunit family. As to quaternary structure, heterodimer of a large (catalytic) subunit and a small (regulatory) subunit.

It carries out the reaction RNA(n) + ATP = RNA(n)-3'-adenine ribonucleotide + diphosphate. Functionally, polymerase that creates the 3'-poly(A) tail of mRNA's. This chain is Poly(A) polymerase catalytic subunit (OPG063), found in Homo sapiens (Human).